We begin with the raw amino-acid sequence, 333 residues long: Potassium channel protein 1 (333 aa).

The Cytoplasmic segment spans residues 1 to 6 (METYEK). Residues 7-27 (IELGIIVIILLILIESVILMT) form a helical membrane-spanning segment. The Extracellular segment spans residues 28–60 (VEGWDFFTAFYTAVVTISTVGYGDYTPQTFLGK). The short motif at 46–51 (TVGYGD) is the Selectivity filter element. Residues 61–81 (LSVIIYIFAGVGAVAYTMGNI) form a helical membrane-spanning segment. The Cytoplasmic segment spans residues 82–333 (ASFFIEGHFR…KLKRYVEGVE (252 aa)). Positions 107–229 (NNHYIICGYG…GADRAVCPYI (123 aa)) constitute an RCK N-terminal domain. The 86-residue stretch at 246 to 331 (EFIHSLVATE…LEKLKRYVEG (86 aa)) folds into the RCK C-terminal domain.

Homotetramer.

The protein resides in the cell membrane. In terms of biological role, potassium channel protein. Seems to conduct potassium at low membrane potentials. This Methanocaldococcus jannaschii (strain ATCC 43067 / DSM 2661 / JAL-1 / JCM 10045 / NBRC 100440) (Methanococcus jannaschii) protein is Potassium channel protein 1.